Here is a 280-residue protein sequence, read N- to C-terminus: Eukaryotic translation initiation factor 3 subunit F-1 (280 aa).

An MPN domain is found at valine 8–glycine 138.

Belongs to the eIF-3 subunit F family. Component of the eukaryotic translation initiation factor 3 (eIF-3) complex. The eIF-3 complex interacts with pix.

It is found in the cytoplasm. Component of the eukaryotic translation initiation factor 3 (eIF-3) complex, which is involved in protein synthesis of a specialized repertoire of mRNAs and, together with other initiation factors, stimulates binding of mRNA and methionyl-tRNAi to the 40S ribosome. The eIF-3 complex specifically targets and initiates translation of a subset of mRNAs involved in cell proliferation. The protein is Eukaryotic translation initiation factor 3 subunit F-1 of Drosophila ananassae (Fruit fly).